The chain runs to 268 residues: Tryptophan synthase alpha chain (268 aa).

Active-site proton acceptor residues include Glu49 and Asp60.

It belongs to the TrpA family. Tetramer of two alpha and two beta chains.

It catalyses the reaction (1S,2R)-1-C-(indol-3-yl)glycerol 3-phosphate + L-serine = D-glyceraldehyde 3-phosphate + L-tryptophan + H2O. It functions in the pathway amino-acid biosynthesis; L-tryptophan biosynthesis; L-tryptophan from chorismate: step 5/5. In terms of biological role, the alpha subunit is responsible for the aldol cleavage of indoleglycerol phosphate to indole and glyceraldehyde 3-phosphate. The sequence is that of Tryptophan synthase alpha chain from Shigella flexneri serotype 5b (strain 8401).